The chain runs to 1198 residues: Sterol 3-beta-glucosyltransferase (1198 aa).

Positions 1 to 11 are enriched in polar residues; the sequence is MPITQIISASD. Disordered stretches follow at residues 1-89 and 124-162; these read MPIT…DNAD and SQVD…PEVP. A compositionally biased stretch (basic residues) spans 35–51; that stretch reads RHHRLSRSLSKFKRWRG. The span at 52–67 shows a compositional bias: low complexity; the sequence is RSNSSLSMGSSEQQEL. Position 76 is a phosphoserine (serine 76). Basic and acidic residues predominate over residues 146–162; that stretch reads VKSKKENLKTKSHPEVP. The region spanning 187 to 236 is the GRAM 1 domain; sequence AKLRQRFCLDEQEPFLNDFPAWLLKDVLVQGHIFITTKHFLFFAYLPKNP. Residues 238–336 form the PH domain; sequence SVKMSGNLNI…WVNALKKEQF (99 aa). A disordered region spans residues 427-465; the sequence is KSSFGKETPATAEQKNNGEDSKYLNVPTSAVPSSENGKK. Residues 452-461 are compositionally biased toward polar residues; it reads VPTSAVPSSE. The GRAM 2 domain maps to 570 to 636; sequence ERFRYHFKFN…VDVETCYKEK (67 aa). The residue at position 693 (serine 693) is a Phosphoserine. UDP-alpha-D-glucose contacts are provided by serine 749, arginine 750, aspartate 752, asparagine 1025, asparagine 1053, valine 1054, histidine 1056, histidine 1069, serine 1072, glycine 1073, threonine 1074, aspartate 1093, and glutamine 1094.

The protein belongs to the glycosyltransferase 28 family.

The protein localises to the cytoplasm. Its subcellular location is the membrane. The enzyme catalyses a sterol + UDP-alpha-D-glucose = a sterol 3-beta-D-glucoside + UDP + H(+). It carries out the reaction ergosterol + UDP-alpha-D-glucose = ergosteryl 3-beta-D-glucoside + UDP + H(+). Sterol glycosyltransferase responsible for the glycosylation of ergosterol to form ergosterol-glucoside. Also shows activity in vitro on other sterols such as cholesterol, beta-sitosterol, stigmasterol and tomatidine. In contrasts to what is observed in Pichia pastoris and Aspergillus oryzae, is not involved in cytoplasm to vacuole transport (Cvt), pexophagy or nonselective autophagy in Saccharomyces cerevisiae. This chain is Sterol 3-beta-glucosyltransferase, found in Saccharomyces cerevisiae (strain YJM789) (Baker's yeast).